Reading from the N-terminus, the 598-residue chain is Elongation factor 4 (598 aa).

The tr-type G domain maps to 3–185 (QHIRNFSIIA…MIVAQIPPPE (183 aa)). Residues 15–20 (DHGKST) and 132–135 (NKID) each bind GTP.

Belongs to the TRAFAC class translation factor GTPase superfamily. Classic translation factor GTPase family. LepA subfamily.

Its subcellular location is the cell inner membrane. The enzyme catalyses GTP + H2O = GDP + phosphate + H(+). Functionally, required for accurate and efficient protein synthesis under certain stress conditions. May act as a fidelity factor of the translation reaction, by catalyzing a one-codon backward translocation of tRNAs on improperly translocated ribosomes. Back-translocation proceeds from a post-translocation (POST) complex to a pre-translocation (PRE) complex, thus giving elongation factor G a second chance to translocate the tRNAs correctly. Binds to ribosomes in a GTP-dependent manner. This Nitrosomonas europaea (strain ATCC 19718 / CIP 103999 / KCTC 2705 / NBRC 14298) protein is Elongation factor 4.